An 88-amino-acid chain; its full sequence is MKNEIHPDYHPVVFQDAGTGFQFLTRSTATSDRTIAWEDGNEYPLIVVDVTSESHPFWTGAQRVMDTAGRVEKFERRFGGMARRKKKA.

Belongs to the bacterial ribosomal protein bL31 family. Type B subfamily. As to quaternary structure, part of the 50S ribosomal subunit.

In Corynebacterium efficiens (strain DSM 44549 / YS-314 / AJ 12310 / JCM 11189 / NBRC 100395), this protein is Large ribosomal subunit protein bL31B.